The following is a 204-amino-acid chain: Large ribosomal subunit protein uL3 (204 aa).

This sequence belongs to the universal ribosomal protein uL3 family. Part of the 50S ribosomal subunit. Forms a cluster with proteins L14 and L19.

One of the primary rRNA binding proteins, it binds directly near the 3'-end of the 23S rRNA, where it nucleates assembly of the 50S subunit. This Azobacteroides pseudotrichonymphae genomovar. CFP2 protein is Large ribosomal subunit protein uL3.